A 277-amino-acid chain; its full sequence is MPADSMEKPTASPIAGAPANSAQTPDKPKSASEHRKSSKPIMEKRRRARINESLGQLKTLILDALKKDSSRHSKLEKADILEMTVKHLRNLQRVQMTAALTADPSVLGKYRAGFNECMNEVTRFLSTCEGVNTEVRTRLLGHLSSCLGQIVAMNYQQPPSSQQPVHVQLPSSTPVPMPCKVNPAEAISPKVFQGGFQLVPATDGQFAFLIPNPAYTSSPGPVIPLYANATSPGGPPSQSPVQGLTSFAHKMPHMAQAVSPLGGSTRADSAESVWRPW.

The tract at residues 1–44 (MPADSMEKPTASPIAGAPANSAQTPDKPKSASEHRKSSKPIMEK) is disordered. Residues 26-35 (DKPKSASEHR) show a composition bias toward basic and acidic residues. The bHLH domain occupies 34-91 (HRKSSKPIMEKRRRARINESLGQLKTLILDALKKDSSRHSKLEKADILEMTVKHLRNL). The Orange domain maps to 110–143 (YRAGFNECMNEVTRFLSTCEGVNTEVRTRLLGHL). The disordered stretch occupies residues 258 to 277 (VSPLGGSTRADSAESVWRPW). The WRPW motif signature appears at 274–277 (WRPW).

Transcription repression requires formation of a complex with a corepressor protein of the Groucho/TLE family. Interacts with the bHLH protein hes6; this interaction may inhibit the transcriptional repressor activity. Binds DNA in the form of a heterodimer with the bHLH protein hey1/hrt1. Interacts (via Orange domain) with id3 (via HLH domain). As to expression, dynamically expressed in the borders of several tissue territories. Expressed in the pre-placodal ectoderm (PPE) from gastrula stage. During gastrulation, expressed in the deep layer of the dorsal lip, the Spemann organizer and three distinct regions in the prospective neuroectoderm: neural plate border, presumptive floor plate/notoplate and anterior neural plate. At later stages, expression is localized to the anterior of the prechordal plate, the presomitic mesoderm, neural tube, neural crest derivatives and several tissues of the central nervous system, with expression in the developing floor plate continues to at least the tadpole stage. From the early tailbud stage, expressed in the dorsoanterior region of the developing pronephros. During early tailbud stages, broadly expressed within the pronephric mesoderm. and in the sensorial layer of the ectoderm covering the pronephros anlagen. During late tailbud to early tadpole stages, expressed in the ventral region of the pronephros. Expression remains in the proximal and distal tubules at late tadpole stages (stage 35).

It is found in the nucleus. Transcriptional repressor. Binds DNA on N-box motifs: 5'-CACNAG-3'. Promotes floor plate development and prechordal plate development. Required for lens development as early as the stage of lens field formation, partly through regulation of gene expression of the cell cycle inhibitor cdknx/p27(xic1). Required for formation of the neural crest downstream of multiple signaling pathways, and acts at the neural plate border via both DNA-binding dependent and independent mechanisms; acts in a DNA-binding dependent manner to repress pro-apoptotic and neural crest differentiation genes, including id3, delta1, and cdknx/p27(xic1), and thus promote the cell survival of neural plate border cells and maintain them in an undifferentiated state. Represses transcription of id3, at least in part through the repression of bmp4. On the other hand, acts in a DNA-independent manner separate from the transcriptional repressor function, to stimulate cell proliferation and promote neural crest formation. Via this DNA-independent route, acts in neurulae upstream of stat3 to transiently up-regulate the notch ligand dll1/delta1, which in turn up-regulates id3 expression. Then interacts directly with id3, which blocks the transcriptional repressor function of hes4-B/hairy2b to allow the progression of neural crest progenitors through specification and differentiation. Also acts via repressor-dependent and repressor-independent mechanisms in early gastrulae to establish the prospective anterior prechordal mesoderm identity in the Spemann organizer; induces specific genes independently from direct transcriptional regulation, and represses the genes specific for neighboring tissues through direct transcriptional repression. Modulates lateral inhibition during notch signaling and regulates the cell context dependent effects of notch (which can have inhibitory, permissive or enhancing roles in muscle or neural differentiation). Inhibits myogenesis. This Xenopus laevis (African clawed frog) protein is Transcription factor HES-4-B (hes4-b).